We begin with the raw amino-acid sequence, 229 residues long: UPF0500 protein C1orf216 (229 aa).

The disordered stretch occupies residues Met-1 to Leu-144. The span at Ser-62–Phe-71 shows a compositional bias: polar residues. Low complexity-rich tracts occupy residues Pro-84–Ala-93 and Ser-115–Ser-126.

It belongs to the UPF0500 family.

This chain is UPF0500 protein C1orf216 (C1orf216), found in Homo sapiens (Human).